Consider the following 380-residue polypeptide: Maintenance of mitochondrial morphology protein 1 (380 aa).

Residues 1–64 lie on the Lumenal side of the membrane; that stretch reads MQGRAIWAEG…IVPSLSFIQG (64 aa). Residues 65-85 form a helical membrane-spanning segment; that stretch reads FMAGQAVLLMLFLGLFRYFFM. The Cytoplasmic segment spans residues 86–380; sequence TSSPGTRAQQ…IGTSPADPLA (295 aa). Residues 147–369 form the SMP-LTD domain; that stretch reads APESLDWLNV…WPHFWHIPLP (223 aa).

This sequence belongs to the MMM1 family. In terms of assembly, homodimer. Component of the ER-mitochondria encounter structure (ERMES) or MDM complex, composed of MMM1, MDM10, MDM12 and MDM34. An MMM1 homodimer associates with one molecule of MDM12 on each side in a pairwise head-to-tail manner, and the SMP-LTD domains of MMM1 and MDM12 generate a continuous hydrophobic tunnel for phospholipid trafficking.

The protein localises to the endoplasmic reticulum membrane. In terms of biological role, component of the ERMES/MDM complex, which serves as a molecular tether to connect the endoplasmic reticulum (ER) and mitochondria. Components of this complex are involved in the control of mitochondrial shape and protein biogenesis, and function in nonvesicular lipid trafficking between the ER and mitochondria. The MDM12-MMM1 subcomplex functions in the major beta-barrel assembly pathway that is responsible for biogenesis of all outer membrane beta-barrel proteins, and acts in a late step after the SAM complex. The MDM10-MDM12-MMM1 subcomplex further acts in the TOM40-specific pathway after the action of the MDM12-MMM1 complex. Essential for establishing and maintaining the structure of mitochondria and maintenance of mtDNA nucleoids. This is Maintenance of mitochondrial morphology protein 1 from Malassezia globosa (strain ATCC MYA-4612 / CBS 7966) (Dandruff-associated fungus).